The primary structure comprises 167 residues: uncharacterized protein (167 aa).

The protein localises to the mitochondrion. This is an uncharacterized protein from Ascobolus immersus.